The primary structure comprises 434 residues: MSILKIHAREIFDSRGNPTVEVDLFTSKGLFRAAVPSGASTGIYEALELRDNDKTRYMGKGVSKAVEHINKTIAPALVSKKLNVTEQEKIDKLMIEMDGTENKSKFGANAILGVSLAVCKAGAVEKGVPLYRHIADLAGNSEVILPVPAFNVINGGSHAGNKLAMQEFMILPVGAANFREAMRIGAEVYHNLKNVIKEKYGKDATNVGDEGGFAPNILENKEGLELLKTAIGKAGYTDKVVIGMDVAASEFFRSGKYDLDFKSPDDPSRYISPDQLADLYKSFIKDYPVVSIEDPFDQDDWGAWQKFTASAGIQVVGDDLTVTNPKRIAKAVNEKSCNCLLLKVNQIGSVTESLQACKLAQANGWGVMVSHRSGETEDTFIADLVVGLCTGQIKTGAPCRSERLAKYNQLLRIEEELGSKAKFAGRNFRNPLAK.

The residue at position 2 (S2) is an N-acetylserine. N6-acetyllysine is present on K5. S27 carries the post-translational modification Phosphoserine. The tract at residues F31–G38 is epitope recognized by CAR and healthy patient antibodies. Mg(2+) is bound at residue S40. Residue Y44 is modified to Phosphotyrosine. The interval R56 to S63 is epitope recognized by CAR antibodies. Position 60 is an N6-acetyllysine; alternate (K60). K60 carries the post-translational modification N6-succinyllysine; alternate. N6-acetyllysine is present on residues K64 and K71. K89 bears the N6-acetyllysine; alternate mark. K89 bears the N6-succinyllysine; alternate mark. 2 positions are modified to N6-acetyllysine: K92 and K126. The required for repression of c-myc promoter activity stretch occupies residues M97–T237. Substrate-binding residues include H158 and E167. 2 positions are modified to N6-acetyllysine: K193 and K199. K202 is subject to N6-acetyllysine; alternate. A Glycyl lysine isopeptide (Lys-Gly) (interchain with G-Cter in SUMO2); alternate cross-link involves residue K202. Catalysis depends on E210, which acts as the Proton donor. K228 and K233 each carry N6-acetyllysine; alternate. An N6-succinyllysine; alternate modification is found at K228. The residue at position 228 (K228) is an N6-(2-hydroxyisobutyryl)lysine; alternate. Residue K233 is modified to N6-malonyllysine; alternate. A Mg(2+)-binding site is contributed by D245. At S254 the chain carries Phosphoserine. K256 carries the post-translational modification N6-acetyllysine. Phosphoserine occurs at positions 263 and 272. Residue K281 is modified to N6-acetyllysine; alternate. At K281 the chain carries N6-(2-hydroxyisobutyryl)lysine; alternate. K285 carries the N6-acetyllysine modification. Residue Y287 is modified to Phosphotyrosine. Phosphoserine is present on S291. E293 and D318 together coordinate Mg(2+). Residues E293 and D318 each contribute to the substrate site. K335 and K343 each carry N6-acetyllysine. K343 functions as the Proton acceptor in the catalytic mechanism. Substrate is bound by residues S370–S373 and K394. The segment at A405–K434 is required for interaction with PLG. K406 is modified (N6-acetyllysine). Position 420 is an N6-acetyllysine; alternate (K420). K420 is modified (N6-succinyllysine; alternate). K420 is modified (N6-malonyllysine; alternate).

The protein belongs to the enolase family. In terms of assembly, mammalian enolase is composed of 3 isozyme subunits, alpha, beta and gamma, which can form homodimers or heterodimers which are cell-type and development-specific. ENO1 interacts with PLG in the neuronal plasma membrane and promotes its activation. The C-terminal lysine is required for this binding. Isoform MBP-1 interacts with TRAPPC2B. Interacts with ENO4 and PGAM2. Interacts with CMTM6. Mg(2+) is required as a cofactor. In terms of processing, ISGylated. Post-translationally, lysine 2-hydroxyisobutyrylation (Khib) by p300/EP300 activates the phosphopyruvate hydratase activity. As to expression, the alpha/alpha homodimer is expressed in embryo and in most adult tissues. The alpha/beta heterodimer and the beta/beta homodimer are found in striated muscle, and the alpha/gamma heterodimer and the gamma/gamma homodimer in neurons.

It localises to the cytoplasm. The protein localises to the cell membrane. It is found in the myofibril. The protein resides in the sarcomere. Its subcellular location is the m line. It localises to the nucleus. It carries out the reaction (2R)-2-phosphoglycerate = phosphoenolpyruvate + H2O. Its pathway is carbohydrate degradation; glycolysis; pyruvate from D-glyceraldehyde 3-phosphate: step 4/5. Functionally, glycolytic enzyme the catalyzes the conversion of 2-phosphoglycerate to phosphoenolpyruvate. In addition to glycolysis, involved in various processes such as growth control, hypoxia tolerance and allergic responses. May also function in the intravascular and pericellular fibrinolytic system due to its ability to serve as a receptor and activator of plasminogen on the cell surface of several cell-types such as leukocytes and neurons. Stimulates immunoglobulin production. Binds to the myc promoter and acts as a transcriptional repressor. May be a tumor suppressor. The protein is Alpha-enolase (ENO1) of Homo sapiens (Human).